Reading from the N-terminus, the 317-residue chain is Putative 2-hydroxyacid dehydrogenase SE_1879 (317 aa).

NAD(+)-binding positions include 155–156, 234–236, and Asp-260; these read EI and AGR. Arg-236 is an active-site residue. Glu-265 is a catalytic residue. The active-site Proton donor is the His-283. An NAD(+)-binding site is contributed by 283-286; sequence HIGN.

The protein belongs to the D-isomer specific 2-hydroxyacid dehydrogenase family.

The chain is Putative 2-hydroxyacid dehydrogenase SE_1879 from Staphylococcus epidermidis (strain ATCC 12228 / FDA PCI 1200).